Here is a 385-residue protein sequence, read N- to C-terminus: S-adenosylmethionine synthase (385 aa).

His-16 contacts ATP. Asp-18 provides a ligand contact to Mg(2+). Glu-44 is a K(+) binding site. Positions 57 and 100 each coordinate L-methionine. The flexible loop stretch occupies residues 100 to 110 (QSPDINQGVDR). ATP contacts are provided by residues 164–166 (DGK), 230–231 (KF), Asp-239, 245–246 (RK), Ala-262, and Lys-266. Residue Asp-239 coordinates L-methionine. Lys-270 lines the L-methionine pocket.

Belongs to the AdoMet synthase family. Homotetramer; dimer of dimers. It depends on Mg(2+) as a cofactor. The cofactor is K(+).

It is found in the cytoplasm. The catalysed reaction is L-methionine + ATP + H2O = S-adenosyl-L-methionine + phosphate + diphosphate. The protein operates within amino-acid biosynthesis; S-adenosyl-L-methionine biosynthesis; S-adenosyl-L-methionine from L-methionine: step 1/1. Functionally, catalyzes the formation of S-adenosylmethionine (AdoMet) from methionine and ATP. The overall synthetic reaction is composed of two sequential steps, AdoMet formation and the subsequent tripolyphosphate hydrolysis which occurs prior to release of AdoMet from the enzyme. The polypeptide is S-adenosylmethionine synthase (Helicobacter pylori (strain J99 / ATCC 700824) (Campylobacter pylori J99)).